A 460-amino-acid polypeptide reads, in one-letter code: Serine--tRNA ligase (460 aa).

The span at 43–66 shows a compositional bias: basic and acidic residues; that stretch reads AEGDGLRQERNEVSSKIGELKQDG. Positions 43-81 are disordered; sequence AEGDGLRQERNEVSSKIGELKQDGKDEEAQEAIDRSQEL. 242 to 244 contacts L-serine; it reads TAE. ATP contacts are provided by residues 273–275 and Val289; that span reads RRE. Glu296 contacts L-serine. 369–372 is a binding site for ATP; that stretch reads EVSS. Ser405 provides a ligand contact to L-serine.

The protein belongs to the class-II aminoacyl-tRNA synthetase family. Type-1 seryl-tRNA synthetase subfamily. In terms of assembly, homodimer. The tRNA molecule binds across the dimer.

It is found in the cytoplasm. It carries out the reaction tRNA(Ser) + L-serine + ATP = L-seryl-tRNA(Ser) + AMP + diphosphate + H(+). The catalysed reaction is tRNA(Sec) + L-serine + ATP = L-seryl-tRNA(Sec) + AMP + diphosphate + H(+). Its pathway is aminoacyl-tRNA biosynthesis; selenocysteinyl-tRNA(Sec) biosynthesis; L-seryl-tRNA(Sec) from L-serine and tRNA(Sec): step 1/1. Catalyzes the attachment of serine to tRNA(Ser). Is also probably able to aminoacylate tRNA(Sec) with serine, to form the misacylated tRNA L-seryl-tRNA(Sec), which will be further converted into selenocysteinyl-tRNA(Sec). This chain is Serine--tRNA ligase (serS), found in Haloarcula marismortui (strain ATCC 43049 / DSM 3752 / JCM 8966 / VKM B-1809) (Halobacterium marismortui).